A 155-amino-acid polypeptide reads, in one-letter code: Small ribosomal subunit protein uS7c (155 aa).

This sequence belongs to the universal ribosomal protein uS7 family. As to quaternary structure, part of the 30S ribosomal subunit.

Its subcellular location is the plastid. The protein localises to the chloroplast. In terms of biological role, one of the primary rRNA binding proteins, it binds directly to 16S rRNA where it nucleates assembly of the head domain of the 30S subunit. The sequence is that of Small ribosomal subunit protein uS7c (rps7) from Aristolochia macrophylla (Dutchman's pipe vine).